The sequence spans 424 residues: Probable carboxypeptidase AN5749 (424 aa).

An N-terminal signal peptide occupies residues 1–17 (MNLSILAALALVSFSTA). N-linked (GlcNAc...) asparagine glycosylation occurs at Asn-58. Asp-139 contacts Zn(2+). The active-site Proton acceptor is Glu-171. Zn(2+) is bound at residue Glu-172. 2 N-linked (GlcNAc...) asparagine glycosylation sites follow: Asn-184 and Asn-323.

Belongs to the peptidase M20A family. The cofactor is Zn(2+).

The protein resides in the secreted. In Emericella nidulans (strain FGSC A4 / ATCC 38163 / CBS 112.46 / NRRL 194 / M139) (Aspergillus nidulans), this protein is Probable carboxypeptidase AN5749.